The primary structure comprises 299 residues: Acetylglutamate kinase (299 aa).

Residues 72–73 (GG), Arg94, and Asn196 contribute to the substrate site.

The protein belongs to the acetylglutamate kinase family. ArgB subfamily.

The protein localises to the cytoplasm. It carries out the reaction N-acetyl-L-glutamate + ATP = N-acetyl-L-glutamyl 5-phosphate + ADP. It functions in the pathway amino-acid biosynthesis; L-arginine biosynthesis; N(2)-acetyl-L-ornithine from L-glutamate: step 2/4. In terms of biological role, catalyzes the ATP-dependent phosphorylation of N-acetyl-L-glutamate. This Burkholderia cenocepacia (strain HI2424) protein is Acetylglutamate kinase.